We begin with the raw amino-acid sequence, 152 residues long: Snaclec anticoagulant protein subunit A (152 aa).

Positions 1–23 (MGRFIFVSFGLLVVYLSLSGTAA) are cleaved as a signal peptide. Residues 24–152 (DCSSSWSSYE…EQRDPFVCEA (129 aa)) enclose the C-type lectin domain. Cystine bridges form between Cys-25–Cys-36, Cys-53–Cys-150, and Cys-125–Cys-142. Ca(2+) is bound by residues Ser-64, Glu-66, and Glu-70. Glu-151 contacts Ca(2+).

Belongs to the snaclec family. In terms of assembly, heterodimer of subunits A and B; disulfide-linked. As to expression, expressed by the venom gland.

Its subcellular location is the secreted. Anticoagulant protein which binds to the gamma-carboxyglutamic acid-domain regions of factors IX and factor X in the presence of calcium with a 1 to 1 stoichiometry. Also inhibits platelet aggregation by binding to platelet glycoprotein Ibalpha (GP1BA) and functioning as a blocker of vWF. Is devoid of hemorrhagic and lethal activities. Possesses antithrombotic and thrombolytic activities. Also hydrolyzes the Aalpha-chain of fibrinogen. Does not affect the Bbeta-chain and the gamma chain. This chain is Snaclec anticoagulant protein subunit A, found in Deinagkistrodon acutus (Hundred-pace snake).